Here is a 462-residue protein sequence, read N- to C-terminus: MAYKLILAAFAATALAAPVEERQSCSNGVWAQCGGQNWSGTPCCTSGNKCVKLNDFYSQCQPGSAEPSSTAAGPSSTTATKTTATGGSSTTAGGSVTSAPPAASDNPYAGVDLWANNYYRSEVMNLAVPKLSGAKATAAAKVADVPSFQWMDTYDHISLMEDTLADIRKANKAGGKYAGQFVVYDLPNRDCAAAASNGEYSLDKDGANKYKAYIAKIKGILQNYSDTKVILVIEPDSLANLVTNLNVDKCAKAESAYKELTVYAIKELNLPNVSMYLDAGHGGWLGWPANIGPAAKLYAQIYKDAGKPSRVRGLVTNVSNYNGWKLSTKPDYTESNPNYDEQRYINAFAPLLAQEGWSNVKFIVDQGRSGKQPTGQKAQGDWCNAKGTGFGLRPSTNTGDALADAFVWVKPGGESDGTSDTSAARYDYHCGLDDALKPAPEAGTWFQAYFEQLLDNANPSFL.

The signal sequence occupies residues 1-16 (MAYKLILAAFAATALA). One can recognise a CBM1 domain in the interval 25-61 (CSNGVWAQCGGQNWSGTPCCTSGNKCVKLNDFYSQCQ). 2 disulfides stabilise this stretch: C33-C50 and C44-C60. N37 carries an N-linked (GlcNAc...) asparagine glycan. Low complexity predominate over residues 64–100 (SAEPSSTAAGPSSTTATKTTATGGSSTTAGGSVTSAP). Residues 64–102 (SAEPSSTAAGPSSTTATKTTATGGSSTTAGGSVTSAPPA) form a disordered region. Residues 66-99 (EPSSTAAGPSSTTATKTTATGGSSTTAGGSVTSA) form a linker region. The catalytic stretch occupies residues 100–462 (PPAASDNPYA…LLDNANPSFL (363 aa)). The active site involves D190. C191 and C250 are disulfide-bonded. Residue N223 is glycosylated (N-linked (GlcNAc...) asparagine). D236 serves as the catalytic Proton donor. 2 N-linked (GlcNAc...) asparagine glycosylation sites follow: N272 and N317. A disulfide bond links C383 and C430. D416 functions as the Nucleophile in the catalytic mechanism.

Belongs to the glycosyl hydrolase 6 (cellulase B) family.

The enzyme catalyses Endohydrolysis of (1-&gt;4)-beta-D-glucosidic linkages in cellulose, lichenin and cereal beta-D-glucans.. This Fusarium oxysporum (Fusarium vascular wilt) protein is Putative endoglucanase type B.